The chain runs to 103 residues: Large ribosomal subunit protein bL21 (103 aa).

This sequence belongs to the bacterial ribosomal protein bL21 family. In terms of assembly, part of the 50S ribosomal subunit. Contacts protein L20.

Its function is as follows. This protein binds to 23S rRNA in the presence of protein L20. This is Large ribosomal subunit protein bL21 from Psychromonas ingrahamii (strain DSM 17664 / CCUG 51855 / 37).